The chain runs to 397 residues: Phosphoglycerate kinase (397 aa).

Residues 21–23, Arg37, 60–63, Arg119, and Arg152 contribute to the substrate site; these read DFN and HLGR. ATP-binding positions include Lys203, Gly294, Glu325, and 354–357; that span reads GGDS.

The protein belongs to the phosphoglycerate kinase family. As to quaternary structure, monomer.

Its subcellular location is the cytoplasm. It carries out the reaction (2R)-3-phosphoglycerate + ATP = (2R)-3-phospho-glyceroyl phosphate + ADP. It functions in the pathway carbohydrate degradation; glycolysis; pyruvate from D-glyceraldehyde 3-phosphate: step 2/5. In Chlorobium phaeobacteroides (strain BS1), this protein is Phosphoglycerate kinase.